Reading from the N-terminus, the 369-residue chain is Quinolinate synthase (369 aa).

Iminosuccinate is bound by residues His-47 and Ser-64. Cys-111 provides a ligand contact to [4Fe-4S] cluster. Iminosuccinate is bound by residues 142–144 and Ser-163; that span reads YVN. Cys-231 is a [4Fe-4S] cluster binding site. Residues 257–259 and Thr-274 each bind iminosuccinate; that span reads HPE. Cys-321 contacts [4Fe-4S] cluster.

This sequence belongs to the quinolinate synthase family. Type 3 subfamily. [4Fe-4S] cluster serves as cofactor.

It is found in the cytoplasm. It catalyses the reaction iminosuccinate + dihydroxyacetone phosphate = quinolinate + phosphate + 2 H2O + H(+). It functions in the pathway cofactor biosynthesis; NAD(+) biosynthesis; quinolinate from iminoaspartate: step 1/1. Catalyzes the condensation of iminoaspartate with dihydroxyacetone phosphate to form quinolinate. This Bacillus pumilus (strain SAFR-032) protein is Quinolinate synthase.